A 92-amino-acid polypeptide reads, in one-letter code: Beta-2-microglobulin (92 aa).

The Ig-like C1-type domain occupies 2–89; it reads PQIQVYSRHP…NHVSMDKPMT (88 aa). C22 and C77 form a disulfide bridge.

Belongs to the beta-2-microglobulin family. In terms of assembly, heterodimer of an alpha chain and a beta chain. Beta-2-microglobulin is the beta-chain of major histocompatibility complex class I molecules.

It localises to the secreted. Component of the class I major histocompatibility complex (MHC). Involved in the presentation of peptide antigens to the immune system. This is Beta-2-microglobulin (B2m) from Mus spretus (Western Mediterranean mouse).